The chain runs to 1237 residues: Anion exchange protein 2 (1237 aa).

The segment at 1–237 (MSSAPRRPAS…SYNLQERRRI (237 aa)) is disordered. The Cytoplasmic portion of the chain corresponds to 1-703 (MSSAPRRPAS…SDFRDALDPQ (703 aa)). Basic and acidic residues-rich tracts occupy residues 37–49 (ELHR…RFEE) and 58–75 (GGEE…EYHR). Composition is skewed to basic residues over residues 76-85 (QSSHHIHHPL) and 94-110 (RRRK…RRRP). Serine 113 carries the phosphoserine modification. Over residues 122–133 (EEGEEDEEEANE) the composition is skewed to acidic residues. Over residues 137–151 (ARAPTEPSPASTPSS) the composition is skewed to low complexity. A phosphoserine mark is found at serine 144, serine 170, and serine 172. The span at 206 to 215 (TAGGDNGGAS) shows a compositional bias: gly residues. Serine 239 is subject to Phosphoserine. Position 253 is a phosphothreonine (threonine 253). At lysine 270 the chain carries N6-methyllysine. A disordered region spans residues 281 to 316 (RRHLVRKNAKGSAQSSREGREPGPTPRSRPRAPHKP). A Phosphoserine modification is found at serine 439. The segment at 445–464 (SLLGHHHGQGAESDPHVTEP) is disordered. A run of 4 helical transmembrane segments spans residues 704-727 (CVAA…GLLG), 733-770 (LIGV…LLVF), 790-812 (VWIG…SFLV), and 822-843 (IFAF…IKIF). The segment at 704-1237 (CVAAVIFIYF…DEYNEMPMPV (534 aa)) is membrane (anion exchange). At 844-896 (QEHPLHGCSVSNSSETDSSENATWAGAGSTLGPANRSSAGQAGQGRPRGQPNT) the chain is on the extracellular side. Asparagine 855, asparagine 864, and asparagine 878 each carry an N-linked (GlcNAc...) asparagine glycan. Residues 897 to 914 (ALLSLVLMAGTFFIAFFL) form a helical membrane-spanning segment. Residues 915–929 (RKFKNSRFFPGRIRR) are Cytoplasmic-facing. Transmembrane regions (helical) follow at residues 930–950 (VIGD…DYSI), 984–1006 (PFPV…LIFM), 1032–1053 (LLLI…LAAA), 1087–1132 (VTGL…IQFY), and 1159–1195 (MHLF…TVPL). Cysteine 1169 is lipidated: S-palmitoyl cysteine.

Belongs to the anion exchanger (TC 2.A.31) family. As to expression, expressed in the ileum (at protein level).

It is found in the cell membrane. It localises to the apical cell membrane. The protein resides in the basolateral cell membrane. It carries out the reaction hydrogencarbonate(in) + chloride(out) = hydrogencarbonate(out) + chloride(in). Its function is as follows. Sodium-independent anion exchanger which mediates the electroneutral exchange of chloride for bicarbonate ions across the cell membrane. Plays an important role in osteoclast differentiation and function. Regulates bone resorption and calpain-dependent actin cytoskeleton organization in osteoclasts via anion exchange-dependent control of pH. Essential for intracellular pH regulation in CD8(+) T-cells upon CD3 stimulation, modulating CD8(+) T-cell response. The polypeptide is Anion exchange protein 2 (SLC4A2) (Oryctolagus cuniculus (Rabbit)).